Reading from the N-terminus, the 225-residue chain is uncharacterized protein (225 aa).

Residues 32 to 82 (PKDKKKQNDTENKKKQPKDGENDKQKEQAETQPFEWIQQKDADDKKESNTA) form a disordered region. Composition is skewed to basic and acidic residues over residues 37-60 (KQND…KEQA) and 69-79 (QQKDADDKKES).

Belongs to the MG067/MG068/MG395 family.

This is an uncharacterized protein from Mycoplasma pneumoniae (strain ATCC 29342 / M129 / Subtype 1) (Mycoplasmoides pneumoniae).